Reading from the N-terminus, the 412-residue chain is Tyrosine--tRNA ligase (412 aa).

Residue Y31 coordinates L-tyrosine. A 'HIGH' region motif is present at residues 36–45; sequence PTAASLHIGH. The L-tyrosine site is built by Y162 and Q166. Residues 222–226 carry the 'KMSKS' region motif; the sequence is KIGKT. K225 provides a ligand contact to ATP. The region spanning 345–412 is the S4 RNA-binding domain; sequence KRWIDLFVGV…KKKKLVLHLI (68 aa).

It belongs to the class-I aminoacyl-tRNA synthetase family. TyrS type 1 subfamily. As to quaternary structure, homodimer.

The protein localises to the cytoplasm. The enzyme catalyses tRNA(Tyr) + L-tyrosine + ATP = L-tyrosyl-tRNA(Tyr) + AMP + diphosphate + H(+). In terms of biological role, catalyzes the attachment of tyrosine to tRNA(Tyr) in a two-step reaction: tyrosine is first activated by ATP to form Tyr-AMP and then transferred to the acceptor end of tRNA(Tyr). This Chlamydia caviae (strain ATCC VR-813 / DSM 19441 / 03DC25 / GPIC) (Chlamydophila caviae) protein is Tyrosine--tRNA ligase.